Reading from the N-terminus, the 78-residue chain is Toxin BmTxKS4 (78 aa).

Positions 1–21 (MKLKISFLILVLFSVFFAIEG) are cleaved as a signal peptide. A propeptide spanning residues 22–32 (IIKWFPASVNG) is cleaved from the precursor.

Post-translationally, contains 3 disulfide bonds. Expressed by the venom gland.

The protein localises to the secreted. Its function is as follows. Reversibly inhibits potassium channels. The protein is Toxin BmTxKS4 of Olivierus martensii (Manchurian scorpion).